The following is a 271-amino-acid chain: Thiazole synthase (271 aa).

K95 acts as the Schiff-base intermediate with DXP in catalysis. Residues G156, A182 to G183, and N204 to T205 each bind 1-deoxy-D-xylulose 5-phosphate.

This sequence belongs to the ThiG family. Homotetramer. Forms heterodimers with either ThiH or ThiS.

The protein resides in the cytoplasm. The enzyme catalyses [ThiS sulfur-carrier protein]-C-terminal-Gly-aminoethanethioate + 2-iminoacetate + 1-deoxy-D-xylulose 5-phosphate = [ThiS sulfur-carrier protein]-C-terminal Gly-Gly + 2-[(2R,5Z)-2-carboxy-4-methylthiazol-5(2H)-ylidene]ethyl phosphate + 2 H2O + H(+). It participates in cofactor biosynthesis; thiamine diphosphate biosynthesis. Catalyzes the rearrangement of 1-deoxy-D-xylulose 5-phosphate (DXP) to produce the thiazole phosphate moiety of thiamine. Sulfur is provided by the thiocarboxylate moiety of the carrier protein ThiS. In vitro, sulfur can be provided by H(2)S. This is Thiazole synthase from Yersinia pseudotuberculosis serotype O:1b (strain IP 31758).